Reading from the N-terminus, the 445-residue chain is MSFRSIVRDVRDSFGSLSRRSFEVTLAGLSGLTGHHRGKSQSTVHELCDADLIIQESRWASLPPELLRDVIRRLEASESTWPSRKDVVSCAAVCKAWREMCKEIVLSPEFCGKLTFPLSLKQPGPRDGMIQCFIKRDKSKSTYHLYLCLSTAVLADSGKFLLSAKRHRKTTCTEYVISMDADNISRSSSTYIGKLRSNFLGTKFIIYDTQPSYNGAVIPPVGRSSRRFNSKKVSPKMPSGSYNIAQVTYELNVLGTRGPRRMHCVMHSIPASSVEPGGIVPGQPEQIVPRAFEESFRSTTSFSKSSIMDRSMDFSSSRDFSSARFSDIAGGTINGDEEGQNKERPLVLRNKAPRWHEQLQCWCLNFRGRVTIASVKNFQLIAAPAQPPAGAPTPSQPAPPEQDKIILQFGKVAKDMFTMDYRYPLSAFQAFAICLSSFDTKLACE.

The F-box domain occupies 56 to 102 (ESRWASLPPELLRDVIRRLEASESTWPSRKDVVSCAAVCKAWREMCK).

It belongs to the TUB family. Ubiquitous.

The polypeptide is Tubby-like F-box protein 8 (TULP8) (Oryza sativa subsp. japonica (Rice)).